Consider the following 513-residue polypeptide: Maturase K (513 aa).

This sequence belongs to the intron maturase 2 family. MatK subfamily.

It is found in the plastid. Its subcellular location is the chloroplast. Functionally, usually encoded in the trnK tRNA gene intron. Probably assists in splicing its own and other chloroplast group II introns. This is Maturase K from Panicum capillare (Witchgrass).